The following is a 200-amino-acid chain: 3-isopropylmalate dehydratase small subunit (200 aa).

Belongs to the LeuD family. LeuD type 1 subfamily. As to quaternary structure, heterodimer of LeuC and LeuD.

The catalysed reaction is (2R,3S)-3-isopropylmalate = (2S)-2-isopropylmalate. It functions in the pathway amino-acid biosynthesis; L-leucine biosynthesis; L-leucine from 3-methyl-2-oxobutanoate: step 2/4. In terms of biological role, catalyzes the isomerization between 2-isopropylmalate and 3-isopropylmalate, via the formation of 2-isopropylmaleate. In Saccharopolyspora erythraea (strain ATCC 11635 / DSM 40517 / JCM 4748 / NBRC 13426 / NCIMB 8594 / NRRL 2338), this protein is 3-isopropylmalate dehydratase small subunit.